Consider the following 517-residue polypeptide: Crotonobetaine/carnitine--CoA ligase (517 aa).

The protein belongs to the ATP-dependent AMP-binding enzyme family.

It catalyses the reaction 4-(trimethylamino)butanoate + ATP + CoA = 4-(trimethylamino)butanoyl-CoA + AMP + diphosphate. It carries out the reaction crotonobetaine + ATP + CoA = crotonobetainyl-CoA + AMP + diphosphate. The catalysed reaction is (R)-carnitine + ATP + CoA = (R)-carnitinyl-CoA + AMP + diphosphate. The protein operates within amine and polyamine metabolism; carnitine metabolism. Catalyzes the transfer of CoA to carnitine, generating the initial carnitinyl-CoA needed for the CaiB reaction cycle. Also has activity toward crotonobetaine and gamma-butyrobetaine. The polypeptide is Crotonobetaine/carnitine--CoA ligase (Salmonella paratyphi B (strain ATCC BAA-1250 / SPB7)).